We begin with the raw amino-acid sequence, 722 residues long: Serine/threonine-protein kinase MARK2 (722 aa).

Residues 1–46 (MSSARTPLPTLNERDTEQPTLGHLDSKPSSKSNMLRGRNSATSADE) form a disordered region. Residues 27-45 (KPSSKSNMLRGRNSATSAD) are compositionally biased toward polar residues. The residue at position 40 (serine 40) is a Phosphoserine. In terms of domain architecture, Protein kinase spans 53 to 304 (YRLLKTIGKG…LEQIMKDRWM (252 aa)). Position 58 is a phosphothreonine; by autocatalysis (threonine 58). Residues 59–67 (IGKGNFAKV) and lysine 82 contribute to the ATP site. Residues serine 91, serine 92, and serine 93 each carry the phosphoserine; by CaMK1 modification. Catalysis depends on aspartate 175, which acts as the Proton acceptor. At threonine 208 the chain carries Phosphothreonine; by LKB1 and TAOK1. Residue serine 212 is modified to Phosphoserine; by GSK3-beta. Position 274 is a phosphoserine; by autocatalysis (serine 274). At threonine 275 the chain carries Phosphothreonine; by autocatalysis. At threonine 294 the chain carries Phosphothreonine; by CaMK1. The UBA domain maps to 323-362 (YKDPRRTELMVSMGYTREEIQDSLVGQRYNEVMATYLLLG). The interval 373–576 (ITLKPRPSAD…SQGRRGASGS (204 aa)) is disordered. Residues serine 408 and serine 409 each carry the phosphoserine modification. Polar residues predominate over residues 417–431 (PTSNSYSKKTQSNNA). A compositionally biased stretch (basic and acidic residues) spans 432–442 (ENKRPEEETGR). Serine 453 carries the post-translational modification Phosphoserine. Threonine 464 is subject to Phosphothreonine. Polar residues predominate over residues 464 to 483 (TPTPSTNSVLSTSTNRSRNS). Phosphoserine occurs at positions 483 and 490. A compositionally biased stretch (polar residues) spans 492-505 (GQASIQNGKDSTAP). Residues 511–524 (ASPSAHNISSSSGA) are compositionally biased toward low complexity. Phosphoserine occurs at positions 512, 514, and 535. Residue threonine 539 is modified to Phosphothreonine; by PKC/PRKCZ. A phosphoserine mark is found at serine 562 and serine 656. The 50-residue stretch at 673 to 722 (TPGHENFVQWEMEVCKLPRLSLNGVRFKRISGTSMAFKNIASKIANELKL) folds into the KA1 domain.

Belongs to the protein kinase superfamily. CAMK Ser/Thr protein kinase family. SNF1 subfamily. Homodimer. Interacts (when phosphorylated at Thr-539) with YWHAZ. Interacts with MTCL1; the interaction is direct and increases MARK2 microtubule-binding ability. Interacts with PAK5; leading to inhibit the protein kinase activity. Interacts with MAPT/TAU. Interacts with YWHAB, YWHAG and YWHAQ. Mg(2+) is required as a cofactor. Autophosphorylated. Phosphorylated at Thr-208 by STK11/LKB1 in complex with STE20-related adapter-alpha (STRADA) pseudo kinase and CAB39. Phosphorylation at Thr-208 by TAOK1 activates the kinase activity, leading to phosphorylation and detachment of MAPT/TAU from microtubules. Phosphorylation at Ser-212 by GSK3-beta (GSK3B) inhibits the kinase activity. Phosphorylation by CaMK1 promotes activity and is required to promote neurite outgrowth. Phosphorylation at Thr-539 by PRKCZ/aPKC in polarized epithelial cells inhibits the kinase activity and promotes binding to 14-3-3 protein YWHAZ, leading to relocation from cell membrane to cytoplasm.

It is found in the cell membrane. The protein localises to the lateral cell membrane. It localises to the cytoplasm. Its subcellular location is the cytoskeleton. The protein resides in the cell projection. It is found in the dendrite. It catalyses the reaction L-seryl-[protein] + ATP = O-phospho-L-seryl-[protein] + ADP + H(+). The enzyme catalyses L-threonyl-[protein] + ATP = O-phospho-L-threonyl-[protein] + ADP + H(+). It carries out the reaction L-seryl-[tau protein] + ATP = O-phospho-L-seryl-[tau protein] + ADP + H(+). The catalysed reaction is L-threonyl-[tau protein] + ATP = O-phospho-L-threonyl-[tau protein] + ADP + H(+). With respect to regulation, inhibited by hymenialdisine. Activated by phosphorylation on Thr-208 by STK11/LKB1 and TAOK1. Inhibited by phosphorylation at Ser-212 or Thr-539. Inhibited by PAK5; inhibition is independent of the kinase activity of PAK5. Functionally, serine/threonine-protein kinase. Involved in cell polarity and microtubule dynamics regulation. Phosphorylates CRTC2/TORC2, DCX, HDAC7, KIF13B, MAP2, MAP4 and RAB11FIP2. Phosphorylates the microtubule-associated protein MAPT/TAU. Plays a key role in cell polarity by phosphorylating the microtubule-associated proteins MAP2, MAP4 and MAPT/TAU at KXGS motifs, causing detachment from microtubules, and their disassembly. Regulates epithelial cell polarity by phosphorylating RAB11FIP2. Involved in the regulation of neuronal migration through its dual activities in regulating cellular polarity and microtubule dynamics, possibly by phosphorylating and regulating DCX. Regulates axogenesis by phosphorylating KIF13B, promoting interaction between KIF13B and 14-3-3 and inhibiting microtubule-dependent accumulation of KIF13B. Also required for neurite outgrowth and establishment of neuronal polarity. Regulates localization and activity of some histone deacetylases by mediating phosphorylation of HDAC7, promoting subsequent interaction between HDAC7 and 14-3-3 and export from the nucleus. Also acts as a positive regulator of the Wnt signaling pathway, probably by mediating phosphorylation of dishevelled proteins (DVL1, DVL2 and/or DVL3). Modulates the developmental decision to build a columnar versus a hepatic epithelial cell apparently by promoting a switch from a direct to a transcytotic mode of apical protein delivery. Essential for the asymmetric development of membrane domains of polarized epithelial cells. The protein is Serine/threonine-protein kinase MARK2 of Rattus norvegicus (Rat).